Consider the following 544-residue polypeptide: Chaperonin GroEL 2 (544 aa).

ATP is bound by residues 29 to 32 (TLGP), 86 to 90 (DGTTT), G413, 479 to 481 (NAA), and D495.

This sequence belongs to the chaperonin (HSP60) family. In terms of assembly, forms a cylinder of 14 subunits composed of two heptameric rings stacked back-to-back. Interacts with the co-chaperonin GroES.

It localises to the cytoplasm. The catalysed reaction is ATP + H2O + a folded polypeptide = ADP + phosphate + an unfolded polypeptide.. Functionally, together with its co-chaperonin GroES, plays an essential role in assisting protein folding. The GroEL-GroES system forms a nano-cage that allows encapsulation of the non-native substrate proteins and provides a physical environment optimized to promote and accelerate protein folding. In Trichodesmium erythraeum (strain IMS101), this protein is Chaperonin GroEL 2.